The following is a 90-amino-acid chain: MDGLTAAEQRELASRMERKQLKEFMTMYSKLVQRCFDNCVNDFTTKSLISREEGCIMRCVDKYMKASSRLNERFQEQNAAMMQGGQLPGR.

The Twin CX3C motif signature appears at 35-59 (CFDNCVNDFTTKSLISREEGCIMRC). 2 disulfide bridges follow: cysteine 35–cysteine 59 and cysteine 39–cysteine 55.

Belongs to the small Tim family. As to quaternary structure, heterohexamer; composed of 3 copies of TIM9 and 3 copies of TIM10, named soluble 70 kDa complex. Associates with the TIM22 complex, whose core is composed of TIM22 and TIM54. Interacts with the transmembrane regions of multi-pass transmembrane proteins in transit.

It is found in the mitochondrion inner membrane. Mitochondrial intermembrane chaperone that participates in the import and insertion of multi-pass transmembrane proteins into the mitochondrial inner membrane. Also required for the transfer of beta-barrel precursors from the TOM complex to the sorting and assembly machinery (SAM complex) of the outer membrane. Acts as a chaperone-like protein that protects the hydrophobic precursors from aggregation and guide them through the mitochondrial intermembrane space. The protein is Mitochondrial import inner membrane translocase subunit tim9 (tim9) of Aspergillus fumigatus (strain ATCC MYA-4609 / CBS 101355 / FGSC A1100 / Af293) (Neosartorya fumigata).